Reading from the N-terminus, the 398-residue chain is Succinate--CoA ligase [ADP-forming] subunit beta (398 aa).

The region spanning 9 to 254 is the ATP-grasp domain; that stretch reads KALLHEFGVP…ETEEDAKEIE (246 aa). ATP is bound by residues K46, 53–55, E109, S112, and E117; that span reads GRG. Mg(2+) contacts are provided by N209 and D223. Substrate contacts are provided by residues N274 and 331 to 333; that span reads GIM.

The protein belongs to the succinate/malate CoA ligase beta subunit family. Heterotetramer of two alpha and two beta subunits. Requires Mg(2+) as cofactor.

The enzyme catalyses succinate + ATP + CoA = succinyl-CoA + ADP + phosphate. It catalyses the reaction GTP + succinate + CoA = succinyl-CoA + GDP + phosphate. It functions in the pathway carbohydrate metabolism; tricarboxylic acid cycle; succinate from succinyl-CoA (ligase route): step 1/1. Functionally, succinyl-CoA synthetase functions in the citric acid cycle (TCA), coupling the hydrolysis of succinyl-CoA to the synthesis of either ATP or GTP and thus represents the only step of substrate-level phosphorylation in the TCA. The beta subunit provides nucleotide specificity of the enzyme and binds the substrate succinate, while the binding sites for coenzyme A and phosphate are found in the alpha subunit. This is Succinate--CoA ligase [ADP-forming] subunit beta from Bradyrhizobium sp. (strain ORS 278).